The following is a 319-amino-acid chain: 4-hydroxy-3-methylbut-2-enyl diphosphate reductase (319 aa).

Residue Cys17 coordinates [4Fe-4S] cluster. (2E)-4-hydroxy-3-methylbut-2-enyl diphosphate is bound by residues His46 and His79. Residues His46 and His79 each contribute to the dimethylallyl diphosphate site. Positions 46 and 79 each coordinate isopentenyl diphosphate. Cys101 contributes to the [4Fe-4S] cluster binding site. (2E)-4-hydroxy-3-methylbut-2-enyl diphosphate is bound at residue His129. His129 contributes to the dimethylallyl diphosphate binding site. His129 contacts isopentenyl diphosphate. Residue Glu131 is the Proton donor of the active site. Residue Thr170 participates in (2E)-4-hydroxy-3-methylbut-2-enyl diphosphate binding. Cys200 contacts [4Fe-4S] cluster. (2E)-4-hydroxy-3-methylbut-2-enyl diphosphate is bound by residues Ser228, Ser229, Asn230, and Ser273. Dimethylallyl diphosphate contacts are provided by Ser228, Ser229, Asn230, and Ser273. The isopentenyl diphosphate site is built by Ser228, Ser229, Asn230, and Ser273.

This sequence belongs to the IspH family. It depends on [4Fe-4S] cluster as a cofactor.

The enzyme catalyses isopentenyl diphosphate + 2 oxidized [2Fe-2S]-[ferredoxin] + H2O = (2E)-4-hydroxy-3-methylbut-2-enyl diphosphate + 2 reduced [2Fe-2S]-[ferredoxin] + 2 H(+). It catalyses the reaction dimethylallyl diphosphate + 2 oxidized [2Fe-2S]-[ferredoxin] + H2O = (2E)-4-hydroxy-3-methylbut-2-enyl diphosphate + 2 reduced [2Fe-2S]-[ferredoxin] + 2 H(+). Its pathway is isoprenoid biosynthesis; dimethylallyl diphosphate biosynthesis; dimethylallyl diphosphate from (2E)-4-hydroxy-3-methylbutenyl diphosphate: step 1/1. It participates in isoprenoid biosynthesis; isopentenyl diphosphate biosynthesis via DXP pathway; isopentenyl diphosphate from 1-deoxy-D-xylulose 5-phosphate: step 6/6. Functionally, catalyzes the conversion of 1-hydroxy-2-methyl-2-(E)-butenyl 4-diphosphate (HMBPP) into a mixture of isopentenyl diphosphate (IPP) and dimethylallyl diphosphate (DMAPP). Acts in the terminal step of the DOXP/MEP pathway for isoprenoid precursor biosynthesis. This chain is 4-hydroxy-3-methylbut-2-enyl diphosphate reductase, found in Cereibacter sphaeroides (strain ATCC 17023 / DSM 158 / JCM 6121 / CCUG 31486 / LMG 2827 / NBRC 12203 / NCIMB 8253 / ATH 2.4.1.) (Rhodobacter sphaeroides).